A 546-amino-acid polypeptide reads, in one-letter code: MHIDNIENLSDREFDYIVVGGGSAGAAVAARLSEDPAVSVALVEAGPDDRGVPEVLQLDRWMELLESGYDWDYPIEPQENGNSFMRHARAKVMGGCSSHNSCIAFWAPREDLDEWEAKYGATGWNAEAAWPLYKRLETNEDAGPDAPHHGDSGPVHLMNVPPKDPTGVALLDACEQAGIPRAKFNTGTTVVNGANFFQINRRADGTRSSSSVSYIHPIVEQENFTLLTGLRARQLVFDADRRCTGVDIVDSAFGHTHRLTARNEVVLSTGAIDTPKLLMLSGIGPAAHLAEHGIEVLVDSPGVGEHLQDHPEGVVQFEAKQPMVAESTQWWEIGIFTPTEDGLDRPDLMMHYGSVPFDMNTLRHGYPTTENGFSLTPNVTHARSRGTVRLRSRDFRDKPMVDPRYFTDPEGHDMRVMVAGIRKAREIAAQPAMAEWTGRELSPGVEAQTDEELQDYIRKTHNTVYHPVGTVRMGAVEDEMSPLDPELRVKGVTGLRVADASVMPEHVTVNPNITVMMIGERCADLIRSARAGETTTADAELSAALA.

FAD-binding positions include 23 to 24, E44, W71, 90 to 92, 96 to 103, A232, and Y465; these read SA, AKV, and CSSHNSCI. Tele-8alpha-FAD histidine is present on H99. The active-site Proton acceptor is the H466. FAD-binding positions include A500 and 510–512; that span reads NPN.

The protein belongs to the GMC oxidoreductase family. Homodimer. The cofactor is FAD.

It carries out the reaction choline + 2 O2 + H2O = glycine betaine + 2 H2O2 + H(+). Its pathway is amine and polyamine biosynthesis; betaine biosynthesis via choline pathway; betaine from choline: step 1/1. Functionally, catalyzes the two-step oxidative conversion of choline to glycine-betaine with betaine aldehyde as an intermediate. Glycine-betaine accumulates to high levels in the cytoplasm of cells to prevent dehydration and plasmolysis in adverse hyperosmotic environments. Accepts either choline or the reaction intermediate betaine-aldehyde as substrate. The sequence is that of Choline oxidase (codA) from Arthrobacter globiformis.